The following is a 65-amino-acid chain: Alpha-toxin OD1 (65 aa).

An LCN-type CS-alpha/beta domain is found at 3-65; the sequence is RDAYIADDKN…VPIRIPGKCR (63 aa). The Important for toxin selectivity for individual Nav channel subtype (Nav1.6/SCN8A and Nav1.7/SCN9A), but not for toxin potency motif lies at 9 to 11; the sequence is DDK. Intrachain disulfides connect Cys13/Cys64, Cys17/Cys37, Cys23/Cys47, and Cys27/Cys49. Arg65 carries the arginine amide modification.

Belongs to the long (4 C-C) scorpion toxin superfamily. Sodium channel inhibitor family. Alpha subfamily. As to expression, expressed by the venom gland.

It localises to the secreted. Functionally, alpha toxins bind voltage-independently at site-3 of sodium channels and inhibit the inactivation of the activated channels. The toxin affect mammalian sodium channels Nav1.7/SCN9A (EC(50)=4.5 nM), Nav1.4/SCN4A (EC(50)=9.6 nM), Nav1.6/SCN8A (EC(50)=30 nM), Nav1.5/SCN5A (only at micromolar concentrations), and insect sodium channel para/tipE (EC(50)=80 nM). In vivo, intraplantar administration of this toxin elicits pain behaviors, including licking and flinching of the hind paw. The polypeptide is Alpha-toxin OD1 (Odontobuthus doriae (Yellow Iranian scorpion)).